The primary structure comprises 313 residues: Ketimine reductase mu-crystallin (313 aa).

Arg-47 lines the 3,3',5-triiodo-L-thyronine pocket. Ser-90, His-91, Arg-118, Ala-143, Val-145, Gln-146, Asn-167, Arg-168, Thr-169, Asn-172, Thr-204, Met-205, and Val-225 together coordinate NADPH. Glu-256 is a 3,3',5-triiodo-L-thyronine binding site. Ser-291 provides a ligand contact to NADPH.

Belongs to the ornithine cyclodeaminase/mu-crystallin family. As to quaternary structure, homodimer. Binds the thyroid hormone triiodothyronine (T3); T3 binding inhibits enzymatic activity.

Its subcellular location is the cytoplasm. The enzyme catalyses L-pipecolate + NADP(+) = Delta(1)-piperideine-2-carboxylate + NADPH + H(+). It catalyses the reaction L-pipecolate + NAD(+) = Delta(1)-piperideine-2-carboxylate + NADH + H(+). The catalysed reaction is L-proline + NADP(+) = 1-pyrroline-2-carboxylate + NADPH + H(+). It carries out the reaction L-proline + NAD(+) = 1-pyrroline-2-carboxylate + NADH + H(+). The enzyme catalyses (3R)-1,4-thiomorpholine-3-carboxylate + NAD(+) = 3,4-dehydrothiomorpholine-3-carboxylate + NADH + 2 H(+). It catalyses the reaction (3R)-1,4-thiomorpholine-3-carboxylate + NADP(+) = 3,4-dehydrothiomorpholine-3-carboxylate + NADPH + 2 H(+). The catalysed reaction is (S)-cystathionine ketimine + NADH + 2 H(+) = (3R,5S)-2,3,5,6,7-pentahydro-1,4-thiazepine-3,5-dicarboxylate + NAD(+). It carries out the reaction (S)-cystathionine ketimine + NADPH + 2 H(+) = (3R,5S)-2,3,5,6,7-pentahydro-1,4-thiazepine-3,5-dicarboxylate + NADP(+). The enzyme catalyses (R)-lanthionine ketimine + NADPH + 2 H(+) = (3R,5R)-1,4-thiomorpholine-3,5-dicarboxylate + NADP(+). It catalyses the reaction Delta(2)-thiazoline-2-carboxylate + NADPH + 2 H(+) = L-thiazolidine-2-carboxylate + NADP(+). In terms of biological role, catalyzes the NAD(P)H-dependent reduction of imine double bonds of a number of cyclic ketimine substrates, including sulfur-containing cyclic ketimines. Under physiological conditions, it efficiently catalyzes delta(1)-piperideine-2-carboxylate (P2C) and delta(1)-pyrroline-2-carboxylate (Pyr2C) reduction, suggesting a central role in lysine and glutamate metabolism. Additional substrates are delta(2)-thiazoline-2-carboxylate (T2C), 3,4-dehydrothiomorpholine-3-carboxylate (AECK), and (R)-lanthionine ketimine (LK) that is reduced at very low rate compared to other substrates. Also catalyzes the NAD(P)H-dependent reduction of (S)-cystathionine ketimine (CysK). The polypeptide is Ketimine reductase mu-crystallin (Rattus norvegicus (Rat)).